A 301-amino-acid chain; its full sequence is Glucose-1-phosphate adenylyltransferase large subunit (301 aa).

This sequence belongs to the bacterial/plant glucose-1-phosphate adenylyltransferase family. In terms of assembly, heterotetramer.

Its subcellular location is the plastid. The protein resides in the chloroplast. It is found in the amyloplast. It catalyses the reaction alpha-D-glucose 1-phosphate + ATP + H(+) = ADP-alpha-D-glucose + diphosphate. The protein operates within glycan biosynthesis; starch biosynthesis. Its activity is regulated as follows. Insensitive to 3'phosphoglycerate and orthophosphate. This protein plays a role in synthesis of starch. It catalyzes the synthesis of the activated glycosyl donor, ADP-glucose from Glc-1-P and ATP. In Triticum aestivum (Wheat), this protein is Glucose-1-phosphate adenylyltransferase large subunit (AGA.1).